Reading from the N-terminus, the 98-residue chain is Large ribosomal subunit protein bL28 (98 aa).

It belongs to the bacterial ribosomal protein bL28 family.

In Rhizobium etli (strain ATCC 51251 / DSM 11541 / JCM 21823 / NBRC 15573 / CFN 42), this protein is Large ribosomal subunit protein bL28.